The chain runs to 116 residues: Ribonuclease T (116 aa).

Residues Lys-18–Phe-99 enclose the Exonuclease domain. The active-site Proton donor/acceptor is the His-86.

This sequence belongs to the RNase T family. Homodimer.

In terms of biological role, trims short 3' overhangs of a variety of RNA species, leaving a one or two nucleotide 3' overhang. Responsible for the end-turnover of tRNA: specifically removes the terminal AMP residue from uncharged tRNA (tRNA-C-C-A). Also appears to be involved in tRNA biosynthesis. The chain is Ribonuclease T from Azotobacter vinelandii.